Here is a 328-residue protein sequence, read N- to C-terminus: Malate dehydrogenase (328 aa).

Residue 11-17 (GAAGQIG) coordinates NAD(+). Residues Arg-94 and Arg-100 each contribute to the substrate site. Residues Asn-107, Gln-114, and 131–133 (VGN) contribute to the NAD(+) site. Positions 133 and 164 each coordinate substrate. His-189 functions as the Proton acceptor in the catalytic mechanism.

This sequence belongs to the LDH/MDH superfamily. MDH type 2 family.

It catalyses the reaction (S)-malate + NAD(+) = oxaloacetate + NADH + H(+). Functionally, catalyzes the reversible oxidation of malate to oxaloacetate. The chain is Malate dehydrogenase from Xanthomonas oryzae pv. oryzae (strain MAFF 311018).